The chain runs to 547 residues: Chaperonin GroEL (547 aa).

ATP contacts are provided by residues 30–33, Lys-51, 87–91, Gly-415, and Asp-495; these read TLGP and DGTTT.

This sequence belongs to the chaperonin (HSP60) family. Forms a cylinder of 14 subunits composed of two heptameric rings stacked back-to-back. Interacts with the co-chaperonin GroES.

The protein localises to the cytoplasm. The enzyme catalyses ATP + H2O + a folded polypeptide = ADP + phosphate + an unfolded polypeptide.. Its function is as follows. Together with its co-chaperonin GroES, plays an essential role in assisting protein folding. The GroEL-GroES system forms a nano-cage that allows encapsulation of the non-native substrate proteins and provides a physical environment optimized to promote and accelerate protein folding. The sequence is that of Chaperonin GroEL from Shewanella pealeana (strain ATCC 700345 / ANG-SQ1).